We begin with the raw amino-acid sequence, 172 residues long: Small ribosomal subunit protein uS5 (172 aa).

An S5 DRBM domain is found at 17-80 (LREKMISVNR…EQARRNMFKV (64 aa)).

This sequence belongs to the universal ribosomal protein uS5 family. Part of the 30S ribosomal subunit. Contacts proteins S4 and S8.

Functionally, with S4 and S12 plays an important role in translational accuracy. In terms of biological role, located at the back of the 30S subunit body where it stabilizes the conformation of the head with respect to the body. In Burkholderia pseudomallei (strain 1106a), this protein is Small ribosomal subunit protein uS5.